Reading from the N-terminus, the 112-residue chain is Signal peptidase complex-like protein DTM1 (112 aa).

The signal sequence occupies residues 1-25; sequence MGRDEMLRRSLVALAAAVVVTGVVT. The next 2 helical transmembrane spans lie at 33–53 and 92–112; these read ATYG…WEFF and MAML…YVSS.

Belongs to the SPCS1 family.

The protein localises to the endoplasmic reticulum membrane. Its function is as follows. Functions in tapetum development during early meiosis. May play a role in the endoplasmic reticulum (ER) membrane in the early stages of tapetum development in anthers. Seems to function after MSP1 and before UDT1. The protein is Signal peptidase complex-like protein DTM1 of Oryza sativa subsp. japonica (Rice).